We begin with the raw amino-acid sequence, 345 residues long: MMNVAIIGATGYSGAELFRLLYGHPHVSQCDVFSSSQDGIHLSESFPHVGAVDGAVLHKLEIEALAKYDAVFFATPPGVSGEWAPALVDRGVKVIDLSGDFRLKDGAVYAQWYGREAAPSAYLERAVYGLTEWNREAVRGAVLLSNPGCYPTATLLGLAPLVKEGLIKEDSIIVDAKSGVSGAGRKAGLGTHFSEVNENVKIYKVNAHQHIPEIEQALQTWNEAVAPITFSTHLIPMTRGIMATIYAKAKQSISPNDLVDLYKTSYEGSPFVRIRQLGQFPATKDVYGSNYCDIGLAYDERTERVTVVSVIDNLMKGAAGQAVQNFNLMMGWDEAEGLRSLPIYP.

Residue Cys149 is part of the active site.

The protein belongs to the NAGSA dehydrogenase family. Type 1 subfamily.

The protein resides in the cytoplasm. The enzyme catalyses N-acetyl-L-glutamate 5-semialdehyde + phosphate + NADP(+) = N-acetyl-L-glutamyl 5-phosphate + NADPH + H(+). It functions in the pathway amino-acid biosynthesis; L-arginine biosynthesis; N(2)-acetyl-L-ornithine from L-glutamate: step 3/4. Its function is as follows. Catalyzes the NADPH-dependent reduction of N-acetyl-5-glutamyl phosphate to yield N-acetyl-L-glutamate 5-semialdehyde. The chain is N-acetyl-gamma-glutamyl-phosphate reductase from Geobacillus stearothermophilus (Bacillus stearothermophilus).